Here is a 394-residue protein sequence, read N- to C-terminus: Acetate kinase (394 aa).

Asn-10 is a Mg(2+) binding site. Lys-17 is a binding site for ATP. Arg-87 serves as a coordination point for substrate. The active-site Proton donor/acceptor is the Asp-144. ATP is bound by residues 204 to 208 (HLGNG), 279 to 281 (DMR), and 327 to 331 (GIGEN). Mg(2+) is bound at residue Glu-381.

This sequence belongs to the acetokinase family. As to quaternary structure, homodimer. The cofactor is Mg(2+). Mn(2+) serves as cofactor.

It localises to the cytoplasm. It catalyses the reaction acetate + ATP = acetyl phosphate + ADP. It functions in the pathway metabolic intermediate biosynthesis; acetyl-CoA biosynthesis; acetyl-CoA from acetate: step 1/2. In terms of biological role, catalyzes the formation of acetyl phosphate from acetate and ATP. Can also catalyze the reverse reaction. The chain is Acetate kinase from Pseudomonas aeruginosa (strain LESB58).